The chain runs to 484 residues: ATP synthase subunit beta (484 aa).

168–175 (GGAGVGKT) serves as a coordination point for ATP.

It belongs to the ATPase alpha/beta chains family. As to quaternary structure, F-type ATPases have 2 components, CF(1) - the catalytic core - and CF(0) - the membrane proton channel. CF(1) has five subunits: alpha(3), beta(3), gamma(1), delta(1), epsilon(1). CF(0) has three main subunits: a(1), b(2) and c(9-12). The alpha and beta chains form an alternating ring which encloses part of the gamma chain. CF(1) is attached to CF(0) by a central stalk formed by the gamma and epsilon chains, while a peripheral stalk is formed by the delta and b chains.

It is found in the cell membrane. The catalysed reaction is ATP + H2O + 4 H(+)(in) = ADP + phosphate + 5 H(+)(out). In terms of biological role, produces ATP from ADP in the presence of a proton gradient across the membrane. The catalytic sites are hosted primarily by the beta subunits. The sequence is that of ATP synthase subunit beta from Arthrobacter sp. (strain FB24).